A 943-amino-acid polypeptide reads, in one-letter code: Centromere protein C (943 aa).

Lys-45 participates in a covalent cross-link: Glycyl lysine isopeptide (Lys-Gly) (interchain with G-Cter in SUMO2). Positions 70-91 (CIQSPSKECQKSHPKSVPVSSK) are disordered. Ser-73 and Ser-96 each carry phosphoserine. A Glycyl lysine isopeptide (Lys-Gly) (interchain with G-Cter in SUMO2) cross-link involves residue Lys-119. Position 130 is a phosphothreonine (Thr-130). Residue Lys-134 forms a Glycyl lysine isopeptide (Lys-Gly) (interchain with G-Cter in SUMO2) linkage. Ser-146 bears the Phosphoserine mark. Residue Lys-180 forms a Glycyl lysine isopeptide (Lys-Gly) (interchain with G-Cter in SUMO2) linkage. Phosphothreonine is present on Thr-183. The residue at position 189 (Ser-189) is a Phosphoserine. Glycyl lysine isopeptide (Lys-Gly) (interchain with G-Cter in SUMO2) cross-links involve residues Lys-212 and Lys-217. A compositionally biased stretch (basic and acidic residues) spans 224 to 239 (VSDEEDKTSEGQERKP). The tract at residues 224-250 (VSDEEDKTSEGQERKPSGSSQNRIRDS) is disordered. Ser-225 carries the phosphoserine modification. Residues Lys-238 and Lys-260 each participate in a glycyl lysine isopeptide (Lys-Gly) (interchain with G-Cter in SUMO2) cross-link. Positions 259 to 273 (KKSFSTLFLETVKRK) match the Nuclear localization signal motif. A Phosphoserine modification is found at Ser-261. Glycyl lysine isopeptide (Lys-Gly) (interchain with G-Cter in SUMO2) cross-links involve residues Lys-271, Lys-273, and Lys-297. Phosphoserine is present on residues Ser-316, Ser-333, Ser-376, and Ser-397. A disordered region spans residues 358–377 (LANDKHSHKPHPVETSQPSD). The tract at residues 403–513 (YSKNAEKPSR…SKNKLVPEEV (111 aa)) is disordered. The span at 412–426 (RSKRTIKQKQRRKFM) shows a compositional bias: basic residues. 2 stretches are compositionally biased toward basic and acidic residues: residues 438–463 (QSKDENIHTSHITQDEFQRNSDRNME) and 488–510 (TRKDKEESKKKRFSSESKNKLVP). At Ser-439 the chain carries Phosphoserine. A Glycyl lysine isopeptide (Lys-Gly) (interchain with G-Cter in SUMO2) cross-link involves residue Lys-440. The Nuclear localization signal motif lies at 484–499 (KKSSTRKDKEESKKKR). A Phosphoserine modification is found at Ser-528. Residue Lys-534 forms a Glycyl lysine isopeptide (Lys-Gly) (interchain with G-Cter in SUMO2) linkage. Disordered regions lie at residues 537-587 (ESPV…ATKG) and 632-717 (DCSR…KQSK). The residue at position 538 (Ser-538) is a Phosphoserine. The short motif at 558–574 (RKSTKKTNQSSKNIRKK) is the Nuclear localization signal element. Residues 570–583 (NIRKKTIPLKRQKT) are compositionally biased toward basic residues. Polar residues predominate over residues 633 to 672 (CSRSTRSSKNEDNIMTAQNVPLKPQTSGYTCNIPTESNLD). Lys-677 is covalently cross-linked (Glycyl lysine isopeptide (Lys-Gly) (interchain with G-Cter in SUMO2)). Residues Ser-684, Ser-709, and Ser-710 each carry the phosphoserine modification. Residues 706 to 715 (VHGSSDDSKQ) are compositionally biased toward basic and acidic residues. Residue Lys-727 forms a Glycyl lysine isopeptide (Lys-Gly) (interchain with G-Cter in SUMO2) linkage. Residue Thr-734 is modified to Phosphothreonine. The interval 737–759 (VRRTKRTRLKPLEYWRGERIDYQ) is MIF2 homology domain II. 2 positions are modified to phosphoserine: Ser-763 and Ser-773. The Nuclear localization signal signature appears at 780-798 (KRKAKENIGKVNKKSNKKR). A Glycyl lysine isopeptide (Lys-Gly) (interchain with G-Cter in SUMO2) cross-link involves residue Lys-807. An MIF2 homology domain III region spans residues 890 to 943 (LVFYVNFGDLLCTLHETPYILSTGDSFYVPSGNYYNIKNLRNEESVLLFTQIKR).

It belongs to the CENP-C/MIF2 family. Oligomer. Component of the CENPA-NAC complex, at least composed of CENPA, CENPC, CENPH, CENPM, CENPN, CENPT and CENPU. The CENPA-NAC complex interacts with the CENPA-CAD complex, composed of CENPI, CENPK, CENPL, CENPO, CENPP, CENPQ, CENPR and CENPS. Binds to DAXX. Interacts with DNMT3B. Interacts directly with CENPA. Identified in a centromere complex containing histones H2A, H2B and H4, and at least CENPA, CENPB, CENPC, CENPT, CENPN, HJURP, SUPT16H, SSRP1 and RSF1. Interacts with MEIKIN.

It is found in the nucleus. Its subcellular location is the chromosome. It localises to the centromere. The protein resides in the kinetochore. Its function is as follows. Component of the CENPA-NAC (nucleosome-associated) complex, a complex that plays a central role in assembly of kinetochore proteins, mitotic progression and chromosome segregation. The CENPA-NAC complex recruits the CENPA-CAD (nucleosome distal) complex and may be involved in incorporation of newly synthesized CENPA into centromeres. CENPC recruits DNA methylation and DNMT3B to both centromeric and pericentromeric satellite repeats and regulates the histone code in these regions. The chain is Centromere protein C (CENPC) from Homo sapiens (Human).